Reading from the N-terminus, the 138-residue chain is Small ribosomal subunit protein uS11B (138 aa).

The disordered stretch occupies residues 118-138 (DVTPVPSDSTRKKGGRRGRRL). The span at 129 to 138 (KKGGRRGRRL) shows a compositional bias: basic residues.

This sequence belongs to the universal ribosomal protein uS11 family. In terms of assembly, component of the small ribosomal subunit (SSU). Mature yeast ribosomes consist of a small (40S) and a large (60S) subunit. The 40S small subunit contains 1 molecule of ribosomal RNA (18S rRNA) and 33 different proteins (encoded by 57 genes). The large 60S subunit contains 3 rRNA molecules (25S, 5.8S and 5S rRNA) and 46 different proteins (encoded by 81 genes). uS11 interacts with eS1 forming part of the mRNA exit tunnel. uS11 interacts with snoRNA U3. uS11 interacts with MPP10. Component of the ribosomal small subunit (SSU) processome composed of at least 40 protein subunits and snoRNA U3.

The protein resides in the cytoplasm. It localises to the nucleus. Its subcellular location is the nucleolus. Its function is as follows. Component of the ribosome, a large ribonucleoprotein complex responsible for the synthesis of proteins in the cell. The small ribosomal subunit (SSU) binds messenger RNAs (mRNAs) and translates the encoded message by selecting cognate aminoacyl-transfer RNA (tRNA) molecules. The large subunit (LSU) contains the ribosomal catalytic site termed the peptidyl transferase center (PTC), which catalyzes the formation of peptide bonds, thereby polymerizing the amino acids delivered by tRNAs into a polypeptide chain. The nascent polypeptides leave the ribosome through a tunnel in the LSU and interact with protein factors that function in enzymatic processing, targeting, and the membrane insertion of nascent chains at the exit of the ribosomal tunnel. uS11 is involved in nucleolar processing of pre-18S ribosomal RNA and ribosome assembly. The chain is Small ribosomal subunit protein uS11B from Saccharomyces cerevisiae (strain ATCC 204508 / S288c) (Baker's yeast).